The chain runs to 62 residues: Short neurotoxin 1 (62 aa).

Over residues leucine 1 to glycine 16 the composition is skewed to polar residues. Residues leucine 1–glycine 20 form a disordered region. 4 disulfide bridges follow: cysteine 3–cysteine 24, cysteine 17–cysteine 41, cysteine 43–cysteine 54, and cysteine 55–cysteine 60.

This sequence belongs to the three-finger toxin family. Short-chain subfamily. Type I alpha-neurotoxin sub-subfamily. In terms of tissue distribution, expressed by the venom gland.

The protein resides in the secreted. In terms of biological role, binds to muscle nicotinic acetylcholine receptor (nAChR) and inhibit acetylcholine from binding to the receptor, thereby impairing neuromuscular transmission. The chain is Short neurotoxin 1 from Naja kaouthia (Monocled cobra).